Reading from the N-terminus, the 339-residue chain is Malate/(S)-sulfolactate dehydrogenase (339 aa).

It belongs to the LDH2/MDH2 oxidoreductase family. Homodimer.

It localises to the cytoplasm. The catalysed reaction is (S)-malate + NAD(+) = oxaloacetate + NADH + H(+). It catalyses the reaction (S)-malate + NADP(+) = oxaloacetate + NADPH + H(+). The enzyme catalyses (2S)-3-sulfolactate + NAD(+) = 3-sulfopyruvate + NADH + H(+). In terms of biological role, acts on oxaloacetate, sulfopyruvate but not on pyruvate. Has a higher selectivity for the coenzyme NADH than for NADPH. The protein is Malate/(S)-sulfolactate dehydrogenase (mdh) of Methanothermus fervidus (strain ATCC 43054 / DSM 2088 / JCM 10308 / V24 S).